Here is a 162-residue protein sequence, read N- to C-terminus: NADH-quinone oxidoreductase subunit I (162 aa).

4Fe-4S ferredoxin-type domains lie at 53-83 (LRRY…IESE) and 93-122 (TRYD…ETHI). Residues Cys63, Cys66, Cys69, Cys73, Cys102, Cys105, Cys108, and Cys112 each coordinate [4Fe-4S] cluster.

Belongs to the complex I 23 kDa subunit family. NDH-1 is composed of 14 different subunits. Subunits NuoA, H, J, K, L, M, N constitute the membrane sector of the complex. [4Fe-4S] cluster is required as a cofactor.

It is found in the cell inner membrane. It catalyses the reaction a quinone + NADH + 5 H(+)(in) = a quinol + NAD(+) + 4 H(+)(out). In terms of biological role, NDH-1 shuttles electrons from NADH, via FMN and iron-sulfur (Fe-S) centers, to quinones in the respiratory chain. The immediate electron acceptor for the enzyme in this species is believed to be ubiquinone. Couples the redox reaction to proton translocation (for every two electrons transferred, four hydrogen ions are translocated across the cytoplasmic membrane), and thus conserves the redox energy in a proton gradient. In Herminiimonas arsenicoxydans, this protein is NADH-quinone oxidoreductase subunit I.